A 162-amino-acid chain; its full sequence is HTH-type transcriptional regulator IscR (162 aa).

Positions 2-131 constitute an HTH rrf2-type domain; it reads RLTSKGRYAV…NNITLGELVN (130 aa). The H-T-H motif DNA-binding region spans 28–51; it reads LADISERQGISLSYLEQLFSRLRK. Residues cysteine 92, cysteine 98, and cysteine 104 each coordinate [2Fe-2S] cluster. The interval 141–162 is disordered; that stretch reads RQHNEAHRPTRAQDAIDVKLRA.

Requires [2Fe-2S] cluster as cofactor.

Its function is as follows. Regulates the transcription of several operons and genes involved in the biogenesis of Fe-S clusters and Fe-S-containing proteins. In Cronobacter sakazakii (strain ATCC BAA-894) (Enterobacter sakazakii), this protein is HTH-type transcriptional regulator IscR.